The following is a 161-amino-acid chain: Anaerobic nitrite reductase GLB1 (161 aa).

Residues 9 to 157 (VFTEEQEALV…LVAAIKSEMK (149 aa)) form the Globin domain. Positions 42–46 (EIAPS) match the Homodimerization motif. Serine 52, lysine 66, histidine 70, arginine 100, and histidine 105 together coordinate heme b. The Homodimerization signature appears at 112 to 123 (NEHFETRFALLE).

It belongs to the plant globin family. Homodimer. It depends on heme b as a cofactor. Root specific.

It localises to the cytoplasm. The protein resides in the nucleus. The catalysed reaction is Fe(III)-heme b-[protein] + nitric oxide + H2O = Fe(II)-heme b-[protein] + nitrite + 2 H(+). In terms of biological role, phytoglobin that reduces nitrite to nitric oxide (NO) under anoxic conditions (e.g. during flooding or in waterlogged soil) and upon root nodulation. Required for general plant development and during nodulation, especially for the onset of symbiosis. Monitors nitric oxide (NO) levels during early phase of the nitrogen-fixing symbiosis and buffers oxygen in functioning nodules. May not function as an oxygen storage or transport protein. Has an unusually high affinity for O(2) through a hexacoordinate heme iron because of a very low dissociation constant. This Trema tomentosum (Peach-leaf poison-bush) protein is Anaerobic nitrite reductase GLB1 (GLB1).